Here is a 500-residue protein sequence, read N- to C-terminus: AMP phosphorylase (500 aa).

AMP-binding positions include glycine 166, 192–197 (SRAVTS), and threonine 201. Residue aspartate 254 is the Proton donor of the active site. AMP contacts are provided by serine 262 and lysine 286.

Belongs to the thymidine/pyrimidine-nucleoside phosphorylase family. Type 2 subfamily.

It catalyses the reaction AMP + phosphate = alpha-D-ribose 1,5-bisphosphate + adenine. The enzyme catalyses CMP + phosphate = cytosine + alpha-D-ribose 1,5-bisphosphate. It carries out the reaction UMP + phosphate = alpha-D-ribose 1,5-bisphosphate + uracil. Catalyzes the conversion of AMP and phosphate to adenine and ribose 1,5-bisphosphate (R15P). Exhibits phosphorylase activity toward CMP and UMP in addition to AMP. Functions in an archaeal AMP degradation pathway, together with R15P isomerase and RubisCO. This Natronomonas pharaonis (strain ATCC 35678 / DSM 2160 / CIP 103997 / JCM 8858 / NBRC 14720 / NCIMB 2260 / Gabara) (Halobacterium pharaonis) protein is AMP phosphorylase (deoA).